The primary structure comprises 207 residues: Large ribosomal subunit protein uL4 (207 aa).

The segment at 48–78 (THKVKTRSEVRGGGRKPWRQKGTGRARQGSI) is disordered. A compositionally biased stretch (basic residues) spans 60-71 (GGRKPWRQKGTG).

It belongs to the universal ribosomal protein uL4 family. In terms of assembly, part of the 50S ribosomal subunit.

In terms of biological role, one of the primary rRNA binding proteins, this protein initially binds near the 5'-end of the 23S rRNA. It is important during the early stages of 50S assembly. It makes multiple contacts with different domains of the 23S rRNA in the assembled 50S subunit and ribosome. Forms part of the polypeptide exit tunnel. In Bacillus pumilus (strain SAFR-032), this protein is Large ribosomal subunit protein uL4.